A 147-amino-acid polypeptide reads, in one-letter code: Hemoglobin subunit epsilon (147 aa).

In terms of domain architecture, Globin spans 3 to 147; sequence HFTAEEKNAI…VANALAHKYH (145 aa). Ser-51 carries the phosphoserine modification. 2 residues coordinate heme b: His-64 and His-93.

This sequence belongs to the globin family. In terms of assembly, heterotetramer of two alpha chains and two epsilon chains in early embryonic hemoglobin Gower-2; two zeta chains and two epsilon chains in early embryonic hemoglobin Gower-1. As to expression, red blood cells.

The epsilon chain is a beta-type chain of early mammalian embryonic hemoglobin. This is Hemoglobin subunit epsilon (HBE1) from Sminthopsis crassicaudata (Fat-tailed dunnart).